Consider the following 344-residue polypeptide: Dihydroorotate dehydrogenase (quinone) (344 aa).

Residues 64-68 and Thr88 contribute to the FMN site; that span reads AGLDK. Lys68 contacts substrate. Substrate is bound at residue 113 to 117; it reads NRMGF. FMN-binding residues include Asn144 and Asn177. Position 177 (Asn177) interacts with substrate. Ser180 functions as the Nucleophile in the catalytic mechanism. Asn182 serves as a coordination point for substrate. FMN-binding residues include Lys222 and Thr250. Substrate is bound at residue 251 to 252; that stretch reads NT. FMN is bound by residues Gly273, Gly302, and 323-324; that span reads YS.

It belongs to the dihydroorotate dehydrogenase family. Type 2 subfamily. In terms of assembly, monomer. Requires FMN as cofactor.

It is found in the cell membrane. The catalysed reaction is (S)-dihydroorotate + a quinone = orotate + a quinol. Its pathway is pyrimidine metabolism; UMP biosynthesis via de novo pathway; orotate from (S)-dihydroorotate (quinone route): step 1/1. Functionally, catalyzes the conversion of dihydroorotate to orotate with quinone as electron acceptor. The polypeptide is Dihydroorotate dehydrogenase (quinone) (Polynucleobacter necessarius subsp. necessarius (strain STIR1)).